A 277-amino-acid chain; its full sequence is Pantothenate synthetase (277 aa).

ATP is bound at residue 26–33 (MGNLHAGH). The Proton donor role is filled by His-33. Gln-57 is a (R)-pantoate binding site. Gln-57 contacts beta-alanine. ATP is bound at residue 143–146 (GEKD). Gln-149 contacts (R)-pantoate. Residues Val-172 and 180 to 183 (LSSR) each bind ATP.

This sequence belongs to the pantothenate synthetase family. As to quaternary structure, homodimer.

The protein resides in the cytoplasm. It carries out the reaction (R)-pantoate + beta-alanine + ATP = (R)-pantothenate + AMP + diphosphate + H(+). It participates in cofactor biosynthesis; (R)-pantothenate biosynthesis; (R)-pantothenate from (R)-pantoate and beta-alanine: step 1/1. Functionally, catalyzes the condensation of pantoate with beta-alanine in an ATP-dependent reaction via a pantoyl-adenylate intermediate. This is Pantothenate synthetase from Nitrosomonas europaea (strain ATCC 19718 / CIP 103999 / KCTC 2705 / NBRC 14298).